Here is a 295-residue protein sequence, read N- to C-terminus: Ribosomal RNA small subunit methyltransferase A (295 aa).

S-adenosyl-L-methionine-binding residues include Asn31, Leu33, Gly58, Glu79, Asp104, and Asn129.

This sequence belongs to the class I-like SAM-binding methyltransferase superfamily. rRNA adenine N(6)-methyltransferase family. RsmA subfamily.

It localises to the cytoplasm. It carries out the reaction adenosine(1518)/adenosine(1519) in 16S rRNA + 4 S-adenosyl-L-methionine = N(6)-dimethyladenosine(1518)/N(6)-dimethyladenosine(1519) in 16S rRNA + 4 S-adenosyl-L-homocysteine + 4 H(+). Specifically dimethylates two adjacent adenosines (A1518 and A1519) in the loop of a conserved hairpin near the 3'-end of 16S rRNA in the 30S particle. May play a critical role in biogenesis of 30S subunits. The protein is Ribosomal RNA small subunit methyltransferase A of Enterococcus faecalis (strain ATCC 700802 / V583).